A 712-amino-acid chain; its full sequence is Aryl hydrocarbon receptor nuclear translocator 2 (712 aa).

A disordered region spans residues 36 to 73 (AGAMPARGGKRRSGMDFDDEDGEGPSKFSRENHSEIER). Arg-42 carries the omega-N-methylarginine modification. Positions 63–73 (FSRENHSEIER) are enriched in basic and acidic residues. Residues 63–116 (FSRENHSEIERRRRNKMTQYITELSDMVPTCSALARKPDKLTILRMAVSHMKSM) enclose the bHLH domain. PAS domains follow at residues 134–209 (TEQE…MTGR) and 323–393 (PVCM…VKLK). The PAC domain occupies 398–441 (SVMYRFRTKNREWLLIRTSSFTFQNPYSDEIEYVICTNTNVKQL). The interval 573–712 (AWTGSRPPFP…DLGMFPPFSE (140 aa)) is disordered. 2 stretches are compositionally biased toward low complexity: residues 597–626 (SSHP…AYPS) and 653–675 (SQWQ…QPGQ).

As to quaternary structure, efficient DNA binding requires dimerization with another bHLH protein. Heterodimer with NPAS4 or SIM1. Heterodimer with the aryl hydrocarbon receptor (AHR) or the SIM1 protein. Interacts with TACC3. As to expression, restricted to adult brain and kidney.

It localises to the nucleus. Functionally, transcription factor that plays a role in the development of the hypothalamo-pituitary axis, postnatal brain growth, and visual and renal function. Specifically recognizes the xenobiotic response element (XRE). This Mus musculus (Mouse) protein is Aryl hydrocarbon receptor nuclear translocator 2 (Arnt2).